The sequence spans 401 residues: Beta-ketoadipyl-CoA thiolase (401 aa).

The Acyl-thioester intermediate role is filled by Cys-90. Catalysis depends on proton acceptor residues His-357 and Cys-387.

The protein belongs to the thiolase-like superfamily. Thiolase family.

The catalysed reaction is succinyl-CoA + acetyl-CoA = 3-oxoadipyl-CoA + CoA. Its pathway is aromatic compound metabolism; beta-ketoadipate pathway; acetyl-CoA and succinyl-CoA from 3-oxoadipate: step 2/2. In terms of biological role, catalyzes thiolytic cleavage of beta-ketoadipyl-CoA to succinyl-CoA and acetyl-CoA. The chain is Beta-ketoadipyl-CoA thiolase (pcaF) from Acinetobacter baylyi (strain ATCC 33305 / BD413 / ADP1).